We begin with the raw amino-acid sequence, 133 residues long: WMLYEHPNYTGHQYFLRRGEYPDFQQWMGLNDSIRSCRVIPQHRGSFRLRIYEREEFRGQMMEFTEDCPQVHEEFNYHDIHSCNVLEGHWILYEQPNYRGRQYYLRPGEYRRYTEWGAVTPRVGAFRRVQEMF.

Residues 1-41 (WMLYEHPNYTGHQYFLRRGEYPDFQQWMGLNDSIRSCRVIP) enclose the Beta/gamma crystallin 'Greek key' 2 domain. Residues 42–46 (QHRGS) are connecting peptide. 2 consecutive Beta/gamma crystallin 'Greek key' domains span residues 47–87 (FRLR…NVLE) and 88–130 (GHWI…RRVQ).

The protein belongs to the beta/gamma-crystallin family. As to quaternary structure, monomer.

Functionally, crystallins are the dominant structural components of the vertebrate eye lens. This chain is Gamma-crystallin 1, found in Rana temporaria (European common frog).